A 118-amino-acid polypeptide reads, in one-letter code: Small ribosomal subunit protein uS13 (118 aa).

The tract at residues 94 to 118 (NLPVRGQNTKNNARTRKGPIRSIKR) is disordered. Over residues 106 to 118 (ARTRKGPIRSIKR) the composition is skewed to basic residues.

It belongs to the universal ribosomal protein uS13 family. In terms of assembly, part of the 30S ribosomal subunit. Forms a loose heterodimer with protein S19. Forms two bridges to the 50S subunit in the 70S ribosome.

Functionally, located at the top of the head of the 30S subunit, it contacts several helices of the 16S rRNA. In the 70S ribosome it contacts the 23S rRNA (bridge B1a) and protein L5 of the 50S subunit (bridge B1b), connecting the 2 subunits; these bridges are implicated in subunit movement. Contacts the tRNAs in the A and P-sites. In Psychrobacter sp. (strain PRwf-1), this protein is Small ribosomal subunit protein uS13.